The sequence spans 363 residues: MTQLKKTSVRKELRTEQPSIYSFELDEIKQWLTENGEKPFRAAQIFEWLYEKRVSSFDEMTNLSKSLREKLESNFVLTTLKTAVKQTSQDGTMKFLFELHDGYTIETVLMRHEYGNSVCVTTQVGCRIGCTFCASTLGGLKRNLEAGEIVAQVVKVQKALDETDERVSSVVIMGIGEPFDNFNEMLAFLKIINHDKGLNIGARHITVSTSGIIPKIYDFADQKMQINFAISLHAPNTEIRSRLMPINKAYKLPDLMEAVKYYIEKTGRRISFEYGLFGGVNDQVEHAEELAELLKDVKCHVNLIPVNYVPERDYVRTPRDQIFAFEKTLKSRGVNVTIRREQGHDIDAACGQLRAKERQDETR.

The Proton acceptor role is filled by glutamate 106. The region spanning 112 to 345 is the Radical SAM core domain; that stretch reads HEYGNSVCVT…VTIRREQGHD (234 aa). Cysteine 119 and cysteine 350 are disulfide-bonded. Residues cysteine 126, cysteine 130, and cysteine 133 each coordinate [4Fe-4S] cluster. S-adenosyl-L-methionine is bound by residues 176 to 177, serine 208, 231 to 233, and asparagine 307; these read GE and SLH. The active-site S-methylcysteine intermediate is cysteine 350.

The protein belongs to the radical SAM superfamily. RlmN family. Requires [4Fe-4S] cluster as cofactor.

It localises to the cytoplasm. It catalyses the reaction adenosine(2503) in 23S rRNA + 2 reduced [2Fe-2S]-[ferredoxin] + 2 S-adenosyl-L-methionine = 2-methyladenosine(2503) in 23S rRNA + 5'-deoxyadenosine + L-methionine + 2 oxidized [2Fe-2S]-[ferredoxin] + S-adenosyl-L-homocysteine. It carries out the reaction adenosine(37) in tRNA + 2 reduced [2Fe-2S]-[ferredoxin] + 2 S-adenosyl-L-methionine = 2-methyladenosine(37) in tRNA + 5'-deoxyadenosine + L-methionine + 2 oxidized [2Fe-2S]-[ferredoxin] + S-adenosyl-L-homocysteine. Functionally, specifically methylates position 2 of adenine 2503 in 23S rRNA and position 2 of adenine 37 in tRNAs. The protein is Probable dual-specificity RNA methyltransferase RlmN of Bacillus velezensis (strain DSM 23117 / BGSC 10A6 / LMG 26770 / FZB42) (Bacillus amyloliquefaciens subsp. plantarum).